A 210-amino-acid polypeptide reads, in one-letter code: Na(+)-translocating NADH-quinone reductase subunit D (210 aa).

6 helical membrane passes run 14–34 (PIVN…ALAV), 42–62 (LVMA…ISMI), 72–92 (IIVQ…LLQA), 103–123 (VFVG…AYAM), 131–151 (FMDG…VGFV), and 178–198 (NGLL…IWII).

This sequence belongs to the NqrDE/RnfAE family. As to quaternary structure, composed of six subunits; NqrA, NqrB, NqrC, NqrD, NqrE and NqrF.

It is found in the cell inner membrane. The enzyme catalyses a ubiquinone + n Na(+)(in) + NADH + H(+) = a ubiquinol + n Na(+)(out) + NAD(+). In terms of biological role, NQR complex catalyzes the reduction of ubiquinone-1 to ubiquinol by two successive reactions, coupled with the transport of Na(+) ions from the cytoplasm to the periplasm. NqrA to NqrE are probably involved in the second step, the conversion of ubisemiquinone to ubiquinol. This chain is Na(+)-translocating NADH-quinone reductase subunit D, found in Shewanella baltica (strain OS223).